We begin with the raw amino-acid sequence, 375 residues long: Probable disease resistance protein At1g52660 (375 aa).

The region spanning 158-372 (ENTGIIGLYG…LSNSPPNFSG (215 aa)) is the NB-ARC domain. 167 to 174 (GVEGVGKT) is a binding site for ATP.

In terms of biological role, possible disease resistance protein. This is Probable disease resistance protein At1g52660 from Arabidopsis thaliana (Mouse-ear cress).